A 261-amino-acid chain; its full sequence is Ribonuclease PH (261 aa).

Phosphate-binding positions include Arg-86 and 124 to 126 (GTR).

The protein belongs to the RNase PH family. Homohexameric ring arranged as a trimer of dimers.

The catalysed reaction is tRNA(n+1) + phosphate = tRNA(n) + a ribonucleoside 5'-diphosphate. Phosphorolytic 3'-5' exoribonuclease that plays an important role in tRNA 3'-end maturation. Removes nucleotide residues following the 3'-CCA terminus of tRNAs; can also add nucleotides to the ends of RNA molecules by using nucleoside diphosphates as substrates, but this may not be physiologically important. Probably plays a role in initiation of 16S rRNA degradation (leading to ribosome degradation) during starvation. The polypeptide is Ribonuclease PH (Persephonella marina (strain DSM 14350 / EX-H1)).